The following is a 185-amino-acid chain: Ribosome-recycling factor (185 aa).

This sequence belongs to the RRF family.

Its subcellular location is the cytoplasm. In terms of biological role, responsible for the release of ribosomes from messenger RNA at the termination of protein biosynthesis. May increase the efficiency of translation by recycling ribosomes from one round of translation to another. This chain is Ribosome-recycling factor, found in Wolbachia pipientis subsp. Culex pipiens (strain wPip).